Consider the following 244-residue polypeptide: Small ribosomal subunit protein eS4 (244 aa).

The S4 RNA-binding domain maps to 43-106; sequence LPLLLVVRDV…DETYLVLFDE (64 aa).

This sequence belongs to the eukaryotic ribosomal protein eS4 family.

The chain is Small ribosomal subunit protein eS4 from Methanococcus maripaludis (strain DSM 14266 / JCM 13030 / NBRC 101832 / S2 / LL).